A 108-amino-acid polypeptide reads, in one-letter code: Thiosulfate sulfurtransferase GlpE (108 aa).

The Rhodanese domain maps to 17 to 105 (QEKEAVLVDI…WQRQFPAEVA (89 aa)). Residue C65 is the Cysteine persulfide intermediate of the active site.

This sequence belongs to the GlpE family.

The protein localises to the cytoplasm. It catalyses the reaction thiosulfate + hydrogen cyanide = thiocyanate + sulfite + 2 H(+). The enzyme catalyses thiosulfate + [thioredoxin]-dithiol = [thioredoxin]-disulfide + hydrogen sulfide + sulfite + 2 H(+). Functionally, transferase that catalyzes the transfer of sulfur from thiosulfate to thiophilic acceptors such as cyanide or dithiols. May function in a CysM-independent thiosulfate assimilation pathway by catalyzing the conversion of thiosulfate to sulfite, which can then be used for L-cysteine biosynthesis. This is Thiosulfate sulfurtransferase GlpE from Shigella dysenteriae serotype 1 (strain Sd197).